The following is a 408-amino-acid chain: UDP-N-acetylglucosamine--dolichyl-phosphate N-acetylglucosaminephosphotransferase (408 aa).

The Lumenal portion of the chain corresponds to 1–10 (MWAFPELPMP). Residues 11–38 (LLVNLIGSLMGFVATVTLIPAFRGHFIA) form a helical membrane-spanning segment. At 39–58 (ARLCGQDLNKSSREQIPESQ) the chain is on the cytoplasmic side. UDP-N-acetyl-alpha-D-glucosamine contacts are provided by residues 44 to 46 (QDL) and Glu56. The helical transmembrane segment at 59 to 78 (GVISGAVFLIILFCFIPFPF) threads the bilayer. Over 79–91 (LNCFVEQQCKAFP) the chain is Lumenal. A helical transmembrane segment spans residues 92–118 (HHEFVALIGALLAICCMIFLGFADDVL). Residues 119–121 (NLR) are Cytoplasmic-facing. The chain crosses the membrane as a helical span at residues 122-143 (WRHKLLLPTAASLPLLMVYFTN). A dolichyl phosphate-binding site is contributed by Lys125. Topologically, residues 144-166 (FGNTTIVVPKPLRPILGLHLDLG) are lumenal. N-linked (GlcNAc...) asparagine glycosylation occurs at Asn146. A helical membrane pass occupies residues 167-186 (ILYYVYMGLLAVFCTNAINI). 178–186 (VFCTNAINI) provides a ligand contact to dolichyl phosphate. Residue Asn185 coordinates Mg(2+). Over 187 to 192 (LAGING) the chain is Cytoplasmic. Asn191 is a UDP-N-acetyl-alpha-D-glucosamine binding site. A helical transmembrane segment spans residues 193-213 (LEAGQSLVISASIIVFNLVEL). Topologically, residues 214–218 (DGDYR) are lumenal. A helical transmembrane segment spans residues 219–242 (DDHIFSLYFMIPFFFTTLGLLYHN). The Cytoplasmic portion of the chain corresponds to 243–250 (WYPSRVFV). Residues 251–269 (GDTFCYFAGMTFAVVGILG) traverse the membrane as a helical segment. Asp252 serves as a coordination point for Mg(2+). Over 270 to 271 (HF) the chain is Lumenal. Residues 272–293 (SKTMLLFFMPQVFNFLYSLPQL) form a helical membrane-spanning segment. The Cytoplasmic portion of the chain corresponds to 294 to 375 (LHIIPCPRHR…LLLKVFGPMH (82 aa)). Residue 301–303 (RHR) participates in UDP-N-acetyl-alpha-D-glucosamine binding. Residues 376–400 (ERNLTLLLLLLQVVGSAVTFSIRYQ) traverse the membrane as a helical segment. The Lumenal portion of the chain corresponds to 401–408 (LVRLFYDV).

Belongs to the glycosyltransferase 4 family. Homodimer. Mg(2+) serves as cofactor.

It is found in the endoplasmic reticulum membrane. It carries out the reaction a di-trans,poly-cis-dolichyl phosphate + UDP-N-acetyl-alpha-D-glucosamine = an N-acetyl-alpha-D-glucosaminyl-diphospho-di-trans,poly-cis-dolichol + UMP. Its pathway is protein modification; protein glycosylation. Inhibited by natural nucleoside antibiotic tunicamycin, which acts as a structural analog and competitor of UDP-GlcNAc. Activated by Man-P-Dol. Activated by manganese. Inhibited by diumycin. In terms of biological role, UDP-N-acetylglucosamine--dolichyl-phosphate N-acetylglucosaminephosphotransferase that operates in the biosynthetic pathway of dolichol-linked oligosaccharides, the glycan precursors employed in protein asparagine (N)-glycosylation. The assembly of dolichol-linked oligosaccharides begins on the cytosolic side of the endoplasmic reticulum membrane and finishes in its lumen. The sequential addition of sugars to dolichol pyrophosphate produces dolichol-linked oligosaccharides containing fourteen sugars, including two GlcNAcs, nine mannoses and three glucoses. Once assembled, the oligosaccharide is transferred from the lipid to nascent proteins by oligosaccharyltransferases. Catalyzes the initial step of dolichol-linked oligosaccharide biosynthesis, transfering GlcNAc-1-P from cytosolic UDP-GlcNAc onto the carrier lipid dolichyl phosphate (P-dolichol), yielding GlcNAc-P-P-dolichol embedded in the cytoplasmic leaflet of the endoplasmic reticulum membrane. The chain is UDP-N-acetylglucosamine--dolichyl-phosphate N-acetylglucosaminephosphotransferase from Bos taurus (Bovine).